A 460-amino-acid chain; its full sequence is Argininosuccinate lyase (460 aa).

It belongs to the lyase 1 family. Argininosuccinate lyase subfamily.

Its subcellular location is the cytoplasm. The enzyme catalyses 2-(N(omega)-L-arginino)succinate = fumarate + L-arginine. The protein operates within amino-acid biosynthesis; L-arginine biosynthesis; L-arginine from L-ornithine and carbamoyl phosphate: step 3/3. The chain is Argininosuccinate lyase from Nitratidesulfovibrio vulgaris (strain DSM 19637 / Miyazaki F) (Desulfovibrio vulgaris).